The following is a 513-amino-acid chain: Protein disulfide-isomerase (513 aa).

Positions 1 to 25 (MAISKVWISLLLALAVVLSAPAARA) are cleaved as a signal peptide. One can recognise a Thioredoxin 1 domain in the interval 26–149 (EEAAAAEEAA…IVEYLKKQVG (124 aa)). Residues Cys-67 and Cys-70 each act as nucleophile in the active site. A disulfide bridge connects residues Cys-67 and Cys-70. Asn-282 carries an N-linked (GlcNAc...) asparagine glycan. One can recognise a Thioredoxin 2 domain in the interval 369-488 (FRKSEPIPEA…IVDYIRKNKE (120 aa)). Active-site nucleophile residues include Cys-411 and Cys-414. An intrachain disulfide couples Cys-411 to Cys-414. Residues 491–507 (GQAAAATEKAAEPAATE) show a composition bias toward low complexity. The interval 491 to 513 (GQAAAATEKAAEPAATEPLKDEL) is disordered. Positions 510-513 (KDEL) match the Prevents secretion from ER motif.

Belongs to the protein disulfide isomerase family.

The protein resides in the endoplasmic reticulum lumen. The catalysed reaction is Catalyzes the rearrangement of -S-S- bonds in proteins.. In terms of biological role, participates in the folding of proteins containing disulfide bonds, may be involved in glycosylation, prolyl hydroxylation and triglyceride transfer. The sequence is that of Protein disulfide-isomerase (PDI) from Hordeum vulgare (Barley).